An 870-amino-acid polypeptide reads, in one-letter code: LPS-assembly protein LptD (870 aa).

The signal sequence occupies residues 1-25 (MKQGKSFIFYCLVLLLCGFQQLSSA).

The protein belongs to the LptD family. In terms of assembly, component of the lipopolysaccharide transport and assembly complex. Interacts with LptE and LptA.

Its subcellular location is the cell outer membrane. In terms of biological role, together with LptE, is involved in the assembly of lipopolysaccharide (LPS) at the surface of the outer membrane. The polypeptide is LPS-assembly protein LptD (Coxiella burnetii (strain RSA 493 / Nine Mile phase I)).